We begin with the raw amino-acid sequence, 999 residues long: Hypoxia up-regulated protein 1 (999 aa).

Residues 1-32 (MAATVRRQRPRRLLCWTLVAVLLADLLALSDT) form the signal peptide. N-linked (GlcNAc...) asparagine glycans are attached at residues asparagine 155, asparagine 222, and asparagine 515. The tract at residues 564–694 (VEDSPEEEST…KKQKPARKQK (131 aa)) is disordered. Serine 567 is modified (phosphoserine). Over residues 574 to 583 (LTKLGNTISS) the composition is skewed to polar residues. Asparagine 596 carries an N-linked (GlcNAc...) asparagine glycan. 2 stretches are compositionally biased toward basic and acidic residues: residues 611–626 (GSKD…KEET) and 641–670 (PKGD…EEKG). Asparagine 830, asparagine 862, and asparagine 869 each carry an N-linked (GlcNAc...) asparagine glycan. Lysine 883 carries the post-translational modification N6-acetyllysine. Residues 909 to 999 (AKFTKPRPRP…QKRSSKNDEL (91 aa)) form a disordered region. N-linked (GlcNAc...) asparagine glycans are attached at residues asparagine 922 and asparagine 931. Positions 949 to 962 (EEAKPILEPDKEET) are enriched in basic and acidic residues. The Prevents secretion from ER motif lies at 996–999 (NDEL).

Belongs to the heat shock protein 70 family. In terms of assembly, part of a large chaperone multiprotein complex comprising DNAJB11, HSP90B1, HSPA5, HYOU, PDIA2, PDIA4, PDIA6, PPIB, SDF2L1, UGGT1 and very small amounts of ERP29, but not, or at very low levels, CALR nor CANX.

The protein resides in the endoplasmic reticulum lumen. Functionally, has a pivotal role in cytoprotective cellular mechanisms triggered by oxygen deprivation. Promotes HSPA5/BiP-mediated ATP nucleotide exchange and thereby activates the unfolded protein response (UPR) pathway in the presence of endoplasmic reticulum stress. May play a role as a molecular chaperone and participate in protein folding. The chain is Hypoxia up-regulated protein 1 (HYOU1) from Cricetulus griseus (Chinese hamster).